Reading from the N-terminus, the 931-residue chain is Chitin synthase 7 (931 aa).

Disordered stretches follow at residues Met-1–Arg-34 and Gly-56–Ser-92. Composition is skewed to polar residues over residues Phe-7–Pro-28 and Pro-83–Ser-92. N-linked (GlcNAc...) asparagine glycosylation occurs at Asn-536. 3 helical membrane-spanning segments follow: residues Ile-573–Ile-593, Ile-615–Leu-635, and Ile-647–Leu-667. N-linked (GlcNAc...) asparagine glycosylation is present at Asn-691. 2 helical membrane passes run Gly-695–Tyr-715 and Phe-725–Cys-745. The tract at residues Leu-763–Leu-789 is disordered. The N-linked (GlcNAc...) asparagine glycan is linked to Asn-819. A helical membrane pass occupies residues Leu-826–Gly-846. N-linked (GlcNAc...) asparagine glycosylation is found at Asn-866 and Asn-874. A helical membrane pass occupies residues Ala-899 to Trp-919.

This sequence belongs to the chitin synthase family. Class III subfamily.

The protein resides in the cell membrane. It carries out the reaction [(1-&gt;4)-N-acetyl-beta-D-glucosaminyl](n) + UDP-N-acetyl-alpha-D-glucosamine = [(1-&gt;4)-N-acetyl-beta-D-glucosaminyl](n+1) + UDP + H(+). Its function is as follows. Polymerizes chitin, a structural polymer of the cell wall and septum, by transferring the sugar moiety of UDP-GlcNAc to the non-reducing end of the growing chitin polymer. This is Chitin synthase 7 from Cryptococcus neoformans var. grubii serotype A (strain H99 / ATCC 208821 / CBS 10515 / FGSC 9487) (Filobasidiella neoformans var. grubii).